The sequence spans 72 residues: Brevinin-2SN4 (72 aa).

The N-terminal stretch at 1–22 is a signal peptide; sequence MFTMKKPMLLLFFLGMISMSLC. Positions 23–40 are cleaved as a propeptide — removed in mature form; that stretch reads QDERGADEDDGGEMTEEE. Residues C66 and C72 are joined by a disulfide bond.

This sequence belongs to the frog skin active peptide (FSAP) family. Brevinin subfamily. In terms of tissue distribution, expressed by the skin glands.

It localises to the secreted. Its function is as follows. Antimicrobial peptide. Active against a variety of Gram-negative and Gram-positive bacterial strains. Not active against fungi. Shows very weak hemolytic activity against human erythrocytes. The polypeptide is Brevinin-2SN4 (Sylvirana spinulosa (Fine-spined frog)).